Reading from the N-terminus, the 274-residue chain is 2,3,4,5-tetrahydropyridine-2,6-dicarboxylate N-succinyltransferase (274 aa).

Residues R106 and D143 each contribute to the substrate site.

It belongs to the transferase hexapeptide repeat family. In terms of assembly, homotrimer.

It is found in the cytoplasm. It catalyses the reaction (S)-2,3,4,5-tetrahydrodipicolinate + succinyl-CoA + H2O = (S)-2-succinylamino-6-oxoheptanedioate + CoA. Its pathway is amino-acid biosynthesis; L-lysine biosynthesis via DAP pathway; LL-2,6-diaminopimelate from (S)-tetrahydrodipicolinate (succinylase route): step 1/3. The polypeptide is 2,3,4,5-tetrahydropyridine-2,6-dicarboxylate N-succinyltransferase (Rickettsia prowazekii (strain Madrid E)).